We begin with the raw amino-acid sequence, 449 residues long: Plasmepsin IV (449 aa).

The Cytoplasmic portion of the chain corresponds to 1-37; the sequence is MALTVKEEEFSNTLIKNASAFDRLKLGNLKNLKIQKK. Positions 1–121 are excised as a propeptide; sequence MALTVKEEEF…SGYAQKGYLG (121 aa). Residues 38 to 58 form a helical; Signal-anchor for type II membrane protein membrane-spanning segment; that stretch reads LQFLYLILFVLITGVFFFFLI. Residues 59–449 are Lumenal-facing; the sequence is GNFYSHRKLY…SVGFAVAKNL (391 aa). One can recognise a Peptidase A1 domain in the interval 137–444; that stretch reads FYGEGQIGTN…DYEKESVGFA (308 aa). The active site involves aspartate 155. A disulfide bridge connects residues cysteine 168 and cysteine 173. The active site involves aspartate 335. A disulfide bridge connects residues cysteine 370 and cysteine 406.

This sequence belongs to the peptidase A1 family. In terms of assembly, component of the hemozoin formation complex (HFC) composed of falcipains FP2A and/or FP2B, plasmepsins PMII, PMIII/HAP and PMIV, heme detoxifying protein HDP and falcilysin FLN. The HFC complex is involved in hemoglobin degradation and detoxification of heme in the food vacuole during the asexual blood stage. Post-translationally, proteolytically cleaved into the soluble active mature form by cysteine proteases in the digestive vacuole of trophozoites. Proteolysis requires an acidic environment. Autoprocessing or transprocessing by other plasmepsins such as PMII may serve as an alternate activation system.

Its subcellular location is the membrane. The protein resides in the vacuole lumen. It catalyses the reaction Hydrolysis of the bonds linking certain hydrophobic residues in hemoglobin or globin. Also cleaves small molecules substrates such as Ala-Leu-Glu-Arg-Thr-Phe-|-Phe(NO2)-Ser-Phe-Pro-Thr.. Its activity is regulated as follows. Inhibited by pepstatin A. In terms of biological role, during the asexual blood stage, catalyzes the cleavage of denatured host hemoglobin (Hb) or globins. Digestion of host Hb is an essential step which provides the parasite with amino acids for protein synthesis, and regulates osmolarity. This Plasmodium falciparum (isolate HB3) protein is Plasmepsin IV.